The primary structure comprises 425 residues: Voltage-dependent calcium channel gamma-8 subunit (425 aa).

A run of 4 helical transmembrane segments spans residues 19 to 39 (VQVL…TIAI), 129 to 149 (SIFP…VAAS), 158 to 178 (IILG…IGVI), and 208 to 228 (FGGL…NIYI). Residues S252 and S255 each carry the phosphoserine modification. The interval 272–304 (RRSRSSSRSSEPSPSRDASPGGPGGPGFASTDI) is disordered. Low complexity predominate over residues 277-287 (SSRSSEPSPSR). A helical membrane pass occupies residues 318–338 (VAAGLAGAGGGGGGAVGAFGG). A compositionally biased stretch (gly residues) spans 343 to 354 (AGGGGGGGGGAG). Disordered stretches follow at residues 343–365 (AGGG…ASGF) and 377–425 (GGGV…TTPV). Residues 387–401 (PPAPPAPAPPAPSAP) are compositionally biased toward pro residues. Polar residues predominate over residues 412–425 (ASNTNTLNRKTTPV).

Belongs to the PMP-22/EMP/MP20 family. CACNG subfamily. As to quaternary structure, interacts with CACNA1C. Identified in a complex with the L-type calcium channel subunits CACNA1C, CACNA2D1 and either CACNB1 or CACNB2. Acts as an auxiliary subunit for AMPA-selective glutamate receptors (AMPARs). Found in a complex with GRIA1, GRIA2, GRIA3, GRIA4, CNIH2, CNIH3, CACNG2, CACNG3, CACNG4, CACNG5 and CACNG7. Interacts with CNIH2. Found in a complex with GRIA1, GRIA2, GRIA3, GRIA4, DLG4 and CNIH2. Palmitoylated. Probably palmitoylated by ZDHHC3 and ZDHHC7. As to expression, detected in heart left ventricle.

The protein localises to the cell membrane. The protein resides in the postsynaptic density membrane. In terms of biological role, regulates the activity of L-type calcium channels that contain CACNA1C as pore-forming subunit. Regulates the trafficking and gating properties of AMPA-selective glutamate receptors (AMPARs). Promotes their targeting to the cell membrane and synapses and modulates their gating properties by slowing their rates of activation, deactivation and desensitization and by mediating their resensitization. Does not show subunit-specific AMPA receptor regulation and regulates all AMPAR subunits. The polypeptide is Voltage-dependent calcium channel gamma-8 subunit (Homo sapiens (Human)).